The sequence spans 66 residues: MAFLKKSLFLVLFLGLVSLSICEEEKRETEEEENDQEEDDKSEEKRFLGLLPSIVSGAVSLVKKLG.

A signal peptide spans 1 to 22 (MAFLKKSLFLVLFLGLVSLSIC). A propeptide spanning residues 23–44 (EEEKRETEEEENDQEEDDKSEE) is cleaved from the precursor. The interval 24–44 (EEKRETEEEENDQEEDDKSEE) is disordered. The span at 30-41 (EEEENDQEEDDK) shows a compositional bias: acidic residues. At leucine 65 the chain carries Leucine amide.

Expressed by the skin glands.

The protein localises to the secreted. In terms of biological role, has antimicrobial activity. The protein is Phylloseptin-H9 of Pithecopus hypochondrialis (Orange-legged leaf frog).